The following is a 317-amino-acid chain: Retinol dehydrogenase 16 (317 aa).

33–57 (FITGCDSGFGTLLARQLDRRGMRVL) contacts NAD(+). Residue Tyr176 is the Proton acceptor of the active site. A helical membrane pass occupies residues 289-309 (LFYLPLSYLPTFLVDALLYWT).

It belongs to the short-chain dehydrogenases/reductases (SDR) family. Homodimer. Not glycosylated.

It localises to the endoplasmic reticulum membrane. It is found in the microsome membrane. It catalyses the reaction all-trans-retinol--[retinol-binding protein] + NAD(+) = all-trans-retinal--[retinol-binding protein] + NADH + H(+). The catalysed reaction is 9-cis-retinol + NAD(+) = 9-cis-retinal + NADH + H(+). It carries out the reaction 11-cis-retinol + NAD(+) = 11-cis-retinal + NADH + H(+). The enzyme catalyses 13-cis-retinol + NAD(+) = 13-cis-retinal + NADH + H(+). It catalyses the reaction androsterone + NAD(+) = 5alpha-androstan-3,17-dione + NADH + H(+). The catalysed reaction is 5alpha-androstane-3alpha,17beta-diol + NAD(+) = 17beta-hydroxy-5alpha-androstan-3-one + NADH + H(+). It functions in the pathway cofactor metabolism; retinol metabolism. Its function is as follows. Oxidoreductase with a preference for NAD. Oxidizes all-trans-retinol, 9-cis-retinol, 11-cis-retinol and 13-cis-retinol to the corresponding aldehydes. Has higher activity towards CRBP-bound retinol than with free retinol. Oxidizes 3-alpha-hydroxysteroids. Oxidizes androstanediol and androsterone to dihydrotestosterone and androstanedione. Can also catalyze the reverse reaction. This chain is Retinol dehydrogenase 16, found in Mus musculus (Mouse).